The primary structure comprises 119 residues: uncharacterized protein (119 aa).

The segment at 86-119 (KKQRMKMLTEQEEEEEEEEEEPPKPKKKVINRKK) is disordered. Residues 95-106 (EQEEEEEEEEEE) show a composition bias toward acidic residues. Residues 110–119 (PKKKVINRKK) show a composition bias toward basic residues.

This is an uncharacterized protein from Sputnik virophage.